We begin with the raw amino-acid sequence, 79 residues long: Cell division protein ZapB (79 aa).

Residues 3 to 79 are a coiled coil; it reads LEVFEKLEAK…QALLGRMEEV (77 aa). K8 bears the N6-acetyllysine mark. The interval 34-65 is disordered; sequence NNSLSQEVQNAQHQREELERENNHLKEQQNGW. Over residues 35 to 45 the composition is skewed to polar residues; sequence NSLSQEVQNAQ. Basic and acidic residues predominate over residues 46–60; the sequence is HQREELERENNHLKE.

It belongs to the ZapB family. In terms of assembly, homodimer. The ends of the coiled-coil dimer bind to each other, forming polymers. Interacts with FtsZ.

It localises to the cytoplasm. Functionally, non-essential, abundant cell division factor that is required for proper Z-ring formation. It is recruited early to the divisome by direct interaction with FtsZ, stimulating Z-ring assembly and thereby promoting cell division earlier in the cell cycle. Its recruitment to the Z-ring requires functional FtsA or ZipA. The sequence is that of Cell division protein ZapB from Shigella boydii serotype 18 (strain CDC 3083-94 / BS512).